The following is a 435-amino-acid chain: Maltodextrin transport system permease protein MalC (435 aa).

10 consecutive transmembrane segments (helical) span residues glycine 34 to proline 54, phenylalanine 73 to phenylalanine 93, tyrosine 130 to valine 150, isoleucine 199 to isoleucine 219, isoleucine 230 to phenylalanine 250, threonine 263 to tryptophan 283, leucine 294 to leucine 314, asparagine 338 to phenylalanine 358, glycine 371 to isoleucine 391, and methionine 404 to phenylalanine 424. Residues leucine 195–alanine 423 enclose the ABC transmembrane type-1 domain.

It belongs to the binding-protein-dependent transport system permease family. MalFG subfamily.

It localises to the cell membrane. Part of the binding-protein-dependent transport system for maltodextrin; probably responsible for the translocation of the substrate across the membrane. The polypeptide is Maltodextrin transport system permease protein MalC (malC) (Streptococcus pneumoniae serotype 4 (strain ATCC BAA-334 / TIGR4)).